Reading from the N-terminus, the 140-residue chain is ATP synthase epsilon chain (140 aa).

This sequence belongs to the ATPase epsilon chain family. In terms of assembly, F-type ATPases have 2 components, CF(1) - the catalytic core - and CF(0) - the membrane proton channel. CF(1) has five subunits: alpha(3), beta(3), gamma(1), delta(1), epsilon(1). CF(0) has three main subunits: a, b and c.

Its subcellular location is the cell inner membrane. Its function is as follows. Produces ATP from ADP in the presence of a proton gradient across the membrane. This chain is ATP synthase epsilon chain, found in Xanthomonas oryzae pv. oryzae (strain MAFF 311018).